A 100-amino-acid chain; its full sequence is Tachykinin-4 (100 aa).

The signal sequence occupies residues 1–19; it reads MPSSVTLLLLMGLSVCTSA. 2 propeptides span residues 20 to 55 and 85 to 100; these read EDGG…LQEV and RASS…QGAE. Residues 80–100 form a disordered region; sequence GLLGRRASSTKGSVDEDQGAE.

It belongs to the tachykinin family.

Its subcellular location is the secreted. Its function is as follows. Tachykinins are active peptides which excite neurons, evoke behavioral responses, are potent vasodilators and secretagogues, and contract (directly or indirectly) many smooth muscles. The polypeptide is Tachykinin-4 (Oryctolagus cuniculus (Rabbit)).